A 285-amino-acid polypeptide reads, in one-letter code: ATP synthase gamma chain (285 aa).

It belongs to the ATPase gamma chain family. In terms of assembly, F-type ATPases have 2 components, CF(1) - the catalytic core - and CF(0) - the membrane proton channel. CF(1) has five subunits: alpha(3), beta(3), gamma(1), delta(1), epsilon(1). CF(0) has three main subunits: a, b and c.

The protein resides in the cell inner membrane. Functionally, produces ATP from ADP in the presence of a proton gradient across the membrane. The gamma chain is believed to be important in regulating ATPase activity and the flow of protons through the CF(0) complex. This is ATP synthase gamma chain from Protochlamydia amoebophila (strain UWE25).